The chain runs to 737 residues: Probable serine/threonine-protein kinase DDB_G0269628 (737 aa).

The 481-residue stretch at 8–488 folds into the Protein kinase domain; it reads YKLIKDLRSG…TLQKMDTSLL (481 aa). ATP is bound by residues 14–22 and Lys-36; that span reads LRSGGEGKA. 2 disordered regions span residues 155–251 and 278–298; these read NTIQ…KKCS and TTAA…SSSN. The segment covering 156–167 has biased composition (polar residues); sequence TIQHSHSSSSLV. The segment covering 168–229 has biased composition (low complexity); that stretch reads NGTTSPTNAT…PSSPSSPLSP (62 aa). Catalysis depends on Asp-349, which acts as the Proton acceptor.

This sequence belongs to the protein kinase superfamily. NEK Ser/Thr protein kinase family. NIMA subfamily.

The enzyme catalyses L-seryl-[protein] + ATP = O-phospho-L-seryl-[protein] + ADP + H(+). It catalyses the reaction L-threonyl-[protein] + ATP = O-phospho-L-threonyl-[protein] + ADP + H(+). This Dictyostelium discoideum (Social amoeba) protein is Probable serine/threonine-protein kinase DDB_G0269628.